Reading from the N-terminus, the 379-residue chain is Cytochrome b (379 aa).

4 helical membrane-spanning segments follow: residues 34 to 54, 78 to 99, 114 to 134, and 179 to 199; these read FGSL…LLAM, WFIR…YLHI, WNTG…GYVL, and FFAL…VHLT. Residues His-84 and His-98 each coordinate heme b. Heme b-binding residues include His-183 and His-197. Residue His-202 participates in a ubiquinone binding. Transmembrane regions (helical) follow at residues 227 to 247, 289 to 309, 321 to 341, and 348 to 368; these read LKDI…AFFS, LGGV…PLLH, LSQL…WIGS, and FIII…VLFP.

This sequence belongs to the cytochrome b family. As to quaternary structure, the cytochrome bc1 complex contains 11 subunits: 3 respiratory subunits (MT-CYB, CYC1 and UQCRFS1), 2 core proteins (UQCRC1 and UQCRC2) and 6 low-molecular weight proteins (UQCRH/QCR6, UQCRB/QCR7, UQCRQ/QCR8, UQCR10/QCR9, UQCR11/QCR10 and a cleavage product of UQCRFS1). This cytochrome bc1 complex then forms a dimer. Heme b is required as a cofactor.

It localises to the mitochondrion inner membrane. In terms of biological role, component of the ubiquinol-cytochrome c reductase complex (complex III or cytochrome b-c1 complex) that is part of the mitochondrial respiratory chain. The b-c1 complex mediates electron transfer from ubiquinol to cytochrome c. Contributes to the generation of a proton gradient across the mitochondrial membrane that is then used for ATP synthesis. This Struthio camelus (Common ostrich) protein is Cytochrome b (MT-CYB).